A 439-amino-acid chain; its full sequence is MRLSRFFLPILKENPKEAEIVSHRLMLRAGMLRQEAAGIYAWLPLGHRVLKKIEQIVREEQNRAGAIELLMPTLQLADLWRESGRYDAYGPEMLRISDRHKRELLYGPTNEEMITEIFRAYVKSYKSLPLNLYHIQWKFRDEQRPRFGVMRGREFLMKDAYSFDVDEAAARKSYNRMFVAYLRTFARMGLKAIPMRAETGPIGGDLSHEFIVLAETGESGVYCDRDVLSLPVPDETVDYDGDLTPIIKQWTSVYAATEDVHDAVRYESEVPEANRLHTRGIEVGQIFYFGTKYSDSMKANVAGPDGTDAPIHGGSYGVGVSRLVGAIIEACHDDNGIIWPEEVAPFRVAILNLKQGDAATDAACEQLYKELAAKGVDVLYDDTDQRAGAKFATADLIGIPWQVLVGPKGLADGKIELKRRSDGSRENIALAETVARLAP.

The protein belongs to the class-II aminoacyl-tRNA synthetase family. ProS type 2 subfamily. In terms of assembly, homodimer.

The protein localises to the cytoplasm. The catalysed reaction is tRNA(Pro) + L-proline + ATP = L-prolyl-tRNA(Pro) + AMP + diphosphate. Its function is as follows. Catalyzes the attachment of proline to tRNA(Pro) in a two-step reaction: proline is first activated by ATP to form Pro-AMP and then transferred to the acceptor end of tRNA(Pro). The sequence is that of Proline--tRNA ligase from Rhodopseudomonas palustris (strain HaA2).